A 145-amino-acid polypeptide reads, in one-letter code: Large ribosomal subunit protein uL13 (145 aa).

This sequence belongs to the universal ribosomal protein uL13 family. Part of the 50S ribosomal subunit. Binds to Obg (AC P20964).

Its function is as follows. This protein is one of the early assembly proteins of the 50S ribosomal subunit, although it is not seen to bind rRNA by itself. It is important during the early stages of 50S assembly. The polypeptide is Large ribosomal subunit protein uL13 (Bacillus subtilis (strain 168)).